Reading from the N-terminus, the 283-residue chain is MKQYLELCRRIVSEGEWVANERTGKRCLTVINADLEYDVANNQFPLITTRKSYWKAAIAEFLGYIRGYDNAADFRELGTKTWDANANENAAWLANPHRRGVDDMGRVYGVQGRAWRKPNGETIDQLRKIVNNLTKGIDDRGEILTFFNPGEFDLGCLRPCMHTHTFSLVGDTLHLTSYQRSCDVPLGLNFNQIQVFTFLALMAQITGKKAGKAYHKIVNAHIYEDQLELMRDVQLKREPFPLPKLEINPDIKTLEDLETWVTMDDFKVVGYQSHEPIKYPFSV.

Arg-22 serves as a coordination point for dUMP. Catalysis depends on Cys-160, which acts as the Nucleophile. DUMP is bound by residues 180-183 (RSCD), Asn-191, and 221-223 (HIY). Residue Asp-183 coordinates (6R)-5,10-methylene-5,6,7,8-tetrahydrofolate. Residue Ser-282 coordinates (6R)-5,10-methylene-5,6,7,8-tetrahydrofolate.

It belongs to the thymidylate synthase family. Bacterial-type ThyA subfamily. In terms of assembly, homodimer.

Its subcellular location is the cytoplasm. The catalysed reaction is dUMP + (6R)-5,10-methylene-5,6,7,8-tetrahydrofolate = 7,8-dihydrofolate + dTMP. Its pathway is pyrimidine metabolism; dTTP biosynthesis. Functionally, catalyzes the reductive methylation of 2'-deoxyuridine-5'-monophosphate (dUMP) to 2'-deoxythymidine-5'-monophosphate (dTMP) while utilizing 5,10-methylenetetrahydrofolate (mTHF) as the methyl donor and reductant in the reaction, yielding dihydrofolate (DHF) as a by-product. This enzymatic reaction provides an intracellular de novo source of dTMP, an essential precursor for DNA biosynthesis. This chain is Thymidylate synthase, found in Haemophilus influenzae (strain PittGG).